Here is a 403-residue protein sequence, read N- to C-terminus: Coenzyme A biosynthesis bifunctional protein CoaBC (403 aa).

The phosphopantothenoylcysteine decarboxylase stretch occupies residues Met1–Arg197. The tract at residues Val198–Ser403 is phosphopantothenate--cysteine ligase. The CTP site is built by Asp285, Lys294, and Phe327.

The protein in the N-terminal section; belongs to the HFCD (homo-oligomeric flavin containing Cys decarboxylase) superfamily. This sequence in the C-terminal section; belongs to the PPC synthetase family. In terms of assembly, homododecamer. The CoaC domain is responsible for dodecamer formation. Mg(2+) serves as cofactor. It depends on FMN as a cofactor.

The enzyme catalyses N-[(R)-4-phosphopantothenoyl]-L-cysteine + H(+) = (R)-4'-phosphopantetheine + CO2. It carries out the reaction (R)-4'-phosphopantothenate + L-cysteine + CTP = N-[(R)-4-phosphopantothenoyl]-L-cysteine + CMP + diphosphate + H(+). It functions in the pathway cofactor biosynthesis; coenzyme A biosynthesis. Catalyzes two sequential steps in the biosynthesis of coenzyme A. In the first step cysteine is conjugated to 4'-phosphopantothenate to form 4-phosphopantothenoylcysteine. In the second step the latter compound is decarboxylated to form 4'-phosphopantotheine. The protein is Coenzyme A biosynthesis bifunctional protein CoaBC of Methanocaldococcus jannaschii (strain ATCC 43067 / DSM 2661 / JAL-1 / JCM 10045 / NBRC 100440) (Methanococcus jannaschii).